The sequence spans 322 residues: RNA-binding motif protein, X-linked 2 (322 aa).

Lys8 participates in a covalent cross-link: Glycyl lysine isopeptide (Lys-Gly) (interchain with G-Cter in SUMO2). In terms of domain architecture, RRM spans 36-114 (AWIFLGGLPY…RTIRVDHVSN (79 aa)). The tract at residues 134 to 322 (KGCGARTPSP…SSNPSDRWRH (189 aa)) is disordered. Thr140 carries the post-translational modification Phosphothreonine. Ser149 carries the phosphoserine modification. The segment covering 155–171 (TKKHKKDKKEKKKKKKE) has biased composition (basic residues). Ser186 and Ser188 each carry phosphoserine. A compositionally biased stretch (basic and acidic residues) spans 195-223 (KEKDDTGPKKHSSKNSERAQKSEPREGQK). Phosphoserine is present on Ser232. Positions 240–274 (RELKKEKPKHEHKSSSRREAREEKTRIRDRGRSSD) are enriched in basic and acidic residues. Residue Lys243 forms a Glycyl lysine isopeptide (Lys-Gly) (interchain with G-Cter in SUMO2) linkage. Position 272 is a phosphoserine (Ser272). Residues 289 to 308 (YRSRSRSRDKSHRHKRARRS) show a composition bias toward basic residues. Ser314 carries the phosphoserine modification.

This sequence belongs to the IST3 family. In terms of assembly, part of the activated spliceosome B/catalytic step 1 spliceosome, one of the forms of the spliceosome which has a well-formed active site but still cannot catalyze the branching reaction and is composed of at least 52 proteins, the U2, U5 and U6 snRNAs and the pre-mRNA. Component of the minor spliceosome, which splices U12-type introns.

The protein localises to the nucleus. Its function is as follows. Involved in pre-mRNA splicing as component of the activated spliceosome. As a component of the minor spliceosome, involved in the splicing of U12-type introns in pre-mRNAs. The polypeptide is RNA-binding motif protein, X-linked 2 (RBMX2) (Homo sapiens (Human)).